Consider the following 306-residue polypeptide: Armadillo repeat-containing protein 10 (306 aa).

A helical transmembrane segment spans residues 7 to 29; it reads VGWVAAGLVLGAGACYCIYRLTR. Phosphoserine is present on Ser-43. Thr-48 bears the Phosphothreonine mark. An ARM repeat occupies 101–143; sequence GGIPIVGNKINSLNQSIKEKALNALNNLSVNVENQTKIKIYVP.

In terms of assembly, interacts with the DNA-binding domain of p53/TP53.

It is found in the endoplasmic reticulum membrane. Its subcellular location is the mitochondrion outer membrane. In terms of biological role, may play a role in cell survival and cell growth. May suppress the transcriptional activity of p53/TP53. This chain is Armadillo repeat-containing protein 10 (Armc10), found in Mus musculus (Mouse).